The sequence spans 349 residues: Crinkler effector protein 5 (349 aa).

An N-terminal signal peptide occupies residues 1–17; the sequence is MVKLFCSIVGVAGSPFS. Residues 18 to 57 form an LQLFLAK domain region; it reads VEVNEGKTVDDLKKAIKAENLDDPTLRNVAPKNLQLFLAK. Residues 58–108 are DWL domain; it reads KGDAWLRYNEDLDTYLQSEIDTSSYLHMRASWKLSKPTLFGPDVSLGEDVV. The HVLVXXP motif signature appears at 109-115; it reads HVLVVVP.

The protein belongs to the Crinkler effector family.

The protein resides in the secreted. It is found in the host nucleus. Its function is as follows. Secreted effector that elicits necrosis in host plants, a characteristic of plant innate immunity. The polypeptide is Crinkler effector protein 5 (Phytophthora infestans (Potato late blight agent)).